The chain runs to 485 residues: Dual specificity protein phosphatase CDC14B (485 aa).

The segment at 1-38 (MKRKSERRSAWATAPPCSRRSSSSSPGVKKSRSSTPQE) is disordered. Positions 1–54 (MKRKSERRSAWATAPPCSRRSSSSSPGVKKSRSSTPQELHRLEQQDDLYLDITD) match the Nucleolar localization signal motif. Residues 15–28 (PPCSRRSSSSSPGV) are compositionally biased toward low complexity. The interval 44-198 (QQDDLYLDIT…AMQYGFFNFN (155 aa)) is a. The linker stretch occupies residues 199–212 (SFNLDEYEHYEKAE). The tract at residues 213–379 (NGDFNWIIPE…EGDYFRQKLR (167 aa)) is b. The 160-residue stretch at 215–374 (DFNWIIPERF…SSLWLEGDYF (160 aa)) folds into the Tyrosine-protein phosphatase domain. Cys314 acts as the Phosphocysteine intermediate in catalysis. The interval 402–424 (LNGLENQDNQEPEPYSDDDEVSG) is disordered. Residues 409–422 (DNQEPEPYSDDDEV) are compositionally biased toward acidic residues.

This sequence belongs to the protein-tyrosine phosphatase family. Non-receptor class CDC14 subfamily. As to quaternary structure, interacts with FZR1/CDH1.

The protein resides in the nucleus. The protein localises to the nucleolus. It is found in the nucleoplasm. It catalyses the reaction O-phospho-L-tyrosyl-[protein] + H2O = L-tyrosyl-[protein] + phosphate. The enzyme catalyses O-phospho-L-seryl-[protein] + H2O = L-seryl-[protein] + phosphate. It carries out the reaction O-phospho-L-threonyl-[protein] + H2O = L-threonyl-[protein] + phosphate. Dual-specificity phosphatase involved in DNA damage response. Essential regulator of the G2 DNA damage checkpoint: following DNA damage, translocates to the nucleus and dephosphorylates FZR1/CDH1, a key activator of the anaphase promoting complex/cyclosome (APC/C). Dephosphorylates SIRT2 around early anaphase. Dephosphorylation of FZR1/CDH1 activates the APC/C, leading to the ubiquitination of PLK1, preventing entry into mitosis. Preferentially dephosphorylates proteins modified by proline-directed kinases. This chain is Dual specificity protein phosphatase CDC14B (Cdc14b), found in Mus musculus (Mouse).